The sequence spans 573 residues: MTDLSRARYAELFGPTTGDRIRLADTDLLIEITEDRGGGPGLAGDEAVFGGGKVLRESMGQGRATRAEGAPDTVITGVVVVDHWGIIKADVGIRGGRIVALGKAGNPDTMSGVHPDLVVGPSTEIIAGNGKILTAGGIDCHVHFICPQIMDEALGGGITTMIGGGTGPAEGSKATTVTPGSWHTARMLEALDGWPMNIALLGKGNTVSSESMWEQLRGGVSGFKLHEDWGSTPAAIDACLTVADAAGVQVALHSDTLNEAGFVEDTLAAIAGRAIHAYHTEGAGGGHAPDIITVAAHANVLPSSTNPTRPHTVNTLDEHLDMLMVCHHLSPKIPEDLAFAESRIRPSTIAAEDLLHDLGAISMIGSDSQAMGRIGEVVLRTWQTAHVMKRRRGFLAGDNGADNQRVQRYVAKYTICPAVAHGLEDEIGSVEVGKLADLVLWDPAFFGVRPHAVIKGGMIAWAAMGDANASIPTPQPVLPRPMFGAAPKAAAATSVHFVAPHALEDGLADRLDLSRRLVPVANVRSRGKADMPRNDAQPRIEVDPDTFTVRIDGDVWEEQPAAELPMAQRYFLF.

The Urease domain occupies 136–573 (GGIDCHVHFI…LPMAQRYFLF (438 aa)). Ni(2+) contacts are provided by His141, His143, and Lys224. Lys224 bears the N6-carboxylysine mark. His226 lines the substrate pocket. Residues His253 and His279 each coordinate Ni(2+). His327 (proton donor) is an active-site residue. Asp367 provides a ligand contact to Ni(2+).

The protein belongs to the metallo-dependent hydrolases superfamily. Urease alpha subunit family. As to quaternary structure, heterotrimer of UreA (gamma), UreB (beta) and UreC (alpha) subunits. Three heterotrimers associate to form the active enzyme. The cofactor is Ni cation. Post-translationally, carboxylation allows a single lysine to coordinate two nickel ions.

The protein localises to the cytoplasm. The catalysed reaction is urea + 2 H2O + H(+) = hydrogencarbonate + 2 NH4(+). Its pathway is nitrogen metabolism; urea degradation; CO(2) and NH(3) from urea (urease route): step 1/1. In Rhodococcus opacus (strain B4), this protein is Urease subunit alpha.